The primary structure comprises 1227 residues: Anion exchange protein 3 (1227 aa).

Residues 1–11 (MANGVIPPPGG) are compositionally biased toward pro residues. 3 disordered regions span residues 1 to 256 (MANG…DEAE), 286 to 312 (KPSR…KKKK), and 428 to 497 (NDDK…GDGH). Topologically, residues 1–707 (MANGVIPPPG…DLRDALHSQC (707 aa)) are cytoplasmic. Residues 58–75 (DPEKPSRSYSERDFEFHR) are compositionally biased toward basic and acidic residues. Composition is skewed to basic residues over residues 76 to 97 (HTSH…KLRR) and 104 to 113 (RHTRRKRKKE). Acidic residues predominate over residues 134–152 (AEEEEEEEEEEEGESEAEP). Phosphoserine is present on residues serine 167, serine 170, serine 175, and serine 198. Residues 194-215 (QSDQSPQRSGSSPSPRARASRI) show a composition bias toward low complexity. Arginine 294 is modified (omega-N-methylarginine). Residues 435–448 (FFPRNPSSSSVNSV) are compositionally biased toward low complexity. The span at 480–497 (HDPDAKEKPLHMPGGDGH) shows a compositional bias: basic and acidic residues. The next 4 membrane-spanning stretches (helical) occupy residues 708-730 (VAAV…GLLG), 736-773 (LMGV…LLVF), 793-815 (VWVG…SFLV), and 825-846 (IFAF…YKVF). The interval 708-1227 (VAAVLFIYFA…DEYNELHMPV (520 aa)) is membrane (anion exchange). Asparagine 868 is a glycosylation site (N-linked (GlcNAc...) asparagine). The chain crosses the membrane as a helical span at residues 888 to 905 (ALLSLILMLGTFLIAFFL). Residues 906–920 (RKFRNSRFLGGKARR) lie on the Cytoplasmic side of the membrane. A run of 5 helical transmembrane segments spans residues 921 to 941 (IIGD…DYSI), 975 to 997 (PFPP…LIFM), 1023 to 1044 (LLLI…LTAA), 1078 to 1123 (VTGV…IQLS), and 1150 to 1186 (MHLF…TVPL). The S-palmitoyl cysteine moiety is linked to residue cysteine 1160.

This sequence belongs to the anion exchanger (TC 2.A.31) family. Expressed in the brain.

It localises to the cell membrane. It carries out the reaction hydrogencarbonate(in) + chloride(out) = hydrogencarbonate(out) + chloride(in). With respect to regulation, inhibited by 4,4'-diisothiocyanatostilbene-2,2'-disulfonic acid (DIDS). Functionally, sodium-independent anion exchanger which mediates the electroneutral exchange of chloride for bicarbonate ions across the cell membrane. May be involved in the regulation of intracellular pH, and the modulation of cardiac action potential. The protein is Anion exchange protein 3 (Slc4a3) of Mus musculus (Mouse).